A 451-amino-acid polypeptide reads, in one-letter code: Bifunctional protein GlmU (451 aa).

Residues 1–229 (MERFAVILAA…FDETIGVNDR (229 aa)) form a pyrophosphorylase region. Residues 8 to 11 (LAAG), K22, Q72, and 77 to 78 (GT) each bind UDP-N-acetyl-alpha-D-glucosamine. Position 102 (D102) interacts with Mg(2+). UDP-N-acetyl-alpha-D-glucosamine contacts are provided by G139, E154, N169, and N227. A Mg(2+)-binding site is contributed by N227. A linker region spans residues 230–250 (VALSQAEAIMRKRTNERLMRE). Residues 251–451 (GVTFMDPAST…QTNKEGYTKR (201 aa)) form an N-acetyltransferase region. Residues R332 and K350 each contribute to the UDP-N-acetyl-alpha-D-glucosamine site. The Proton acceptor role is filled by H362. UDP-N-acetyl-alpha-D-glucosamine-binding residues include Y365 and N376. Acetyl-CoA-binding positions include 385–386 (NY), A422, and R439.

In the N-terminal section; belongs to the N-acetylglucosamine-1-phosphate uridyltransferase family. It in the C-terminal section; belongs to the transferase hexapeptide repeat family. Homotrimer. Mg(2+) serves as cofactor.

The protein localises to the cytoplasm. The enzyme catalyses alpha-D-glucosamine 1-phosphate + acetyl-CoA = N-acetyl-alpha-D-glucosamine 1-phosphate + CoA + H(+). It carries out the reaction N-acetyl-alpha-D-glucosamine 1-phosphate + UTP + H(+) = UDP-N-acetyl-alpha-D-glucosamine + diphosphate. It participates in nucleotide-sugar biosynthesis; UDP-N-acetyl-alpha-D-glucosamine biosynthesis; N-acetyl-alpha-D-glucosamine 1-phosphate from alpha-D-glucosamine 6-phosphate (route II): step 2/2. It functions in the pathway nucleotide-sugar biosynthesis; UDP-N-acetyl-alpha-D-glucosamine biosynthesis; UDP-N-acetyl-alpha-D-glucosamine from N-acetyl-alpha-D-glucosamine 1-phosphate: step 1/1. The protein operates within bacterial outer membrane biogenesis; LPS lipid A biosynthesis. In terms of biological role, catalyzes the last two sequential reactions in the de novo biosynthetic pathway for UDP-N-acetylglucosamine (UDP-GlcNAc). The C-terminal domain catalyzes the transfer of acetyl group from acetyl coenzyme A to glucosamine-1-phosphate (GlcN-1-P) to produce N-acetylglucosamine-1-phosphate (GlcNAc-1-P), which is converted into UDP-GlcNAc by the transfer of uridine 5-monophosphate (from uridine 5-triphosphate), a reaction catalyzed by the N-terminal domain. In Exiguobacterium sp. (strain ATCC BAA-1283 / AT1b), this protein is Bifunctional protein GlmU.